The sequence spans 188 residues: Large ribosomal subunit protein eL18 (188 aa).

Lys-119 participates in a covalent cross-link: Glycyl lysine isopeptide (Lys-Gly) (interchain with G-Cter in SUMO2). Position 130 is a phosphoserine (Ser-130). Positions 151–188 are disordered; it reads HFGKAPGTPHSHTKPYVRSKGRKFERARGRRASRGYKN. At Thr-158 the chain carries Phosphothreonine. 2 stretches are compositionally biased toward basic residues: residues 161–171 and 178–188; these read SHTKPYVRSKG and RGRRASRGYKN. Lys-164 is covalently cross-linked (Glycyl lysine isopeptide (Lys-Gly) (interchain with G-Cter in SUMO2)).

It belongs to the eukaryotic ribosomal protein eL18 family. As to quaternary structure, component of the large ribosomal subunit.

The protein localises to the cytoplasm. Its subcellular location is the cytosol. The protein resides in the rough endoplasmic reticulum. Functionally, component of the large ribosomal subunit. The ribosome is a large ribonucleoprotein complex responsible for the synthesis of proteins in the cell. This chain is Large ribosomal subunit protein eL18 (RPL18), found in Canis lupus familiaris (Dog).